A 64-amino-acid polypeptide reads, in one-letter code: Large ribosomal subunit protein uL1 (64 aa).

It belongs to the universal ribosomal protein uL1 family. As to quaternary structure, part of the 50S ribosomal subunit.

Binds directly to 23S rRNA. The L1 stalk is quite mobile in the ribosome, and is involved in E site tRNA release. Its function is as follows. Protein L1 is also a translational repressor protein, it controls the translation of the L11 operon by binding to its mRNA. The sequence is that of Large ribosomal subunit protein uL1 (rplA) from Streptomyces lavendulae.